Reading from the N-terminus, the 308-residue chain is MIGKVAGTAAIAGISFLAGKYSNDDLPIFRNVQSATNVPMNQIQVSEPMTVKPASLNADAMGPSRSAEIMKHGYPGFTNVRTYEDFVLSYDYKTRTAHWVCEHLTPERLKHAEGVDRKLCEFKPDITFPQKFLSQNTDYKCSGFDRGHLAAAGNHRKSQLAVDQTFYLSNMSPQVGRGFNRDKWNDLEMHCRRVAKKMINSYIITGPLYLPKLEGDGKKYIKYQVIGDNNVAVPTHFFKVALFEVTPGKFELESYILPNAVIEDTVEISKFHVPLDAVERSAGLEIFARLDPKSIVKENGAKKGGLLW.

His148 (proton acceptor) is an active-site residue. Mg(2+) is bound at residue Asn180.

It belongs to the DNA/RNA non-specific endonuclease family. Homodimer; disulfide-linked. Interacts with crn-5, crn-4, crn-1 and cyn-13. It depends on Mg(2+) as a cofactor.

The protein localises to the mitochondrion. In terms of biological role, endonuclease important for programmed cell death; it mediates apoptotic DNA fragmentation. The protein is Endonuclease G, mitochondrial (cps-6) of Caenorhabditis elegans.